Here is a 120-residue protein sequence, read N- to C-terminus: MDYEFLRDITGGVKVRMSMGHEVVGHWFNEEVKENLALLDEVEQAARTIKGSERSWQRIGHEYTLWMDGEEVMVRANQMEISGDEMEEGMSYYDEESFSLCGVEDFLQVVKAYREFMQQK.

It belongs to the UPF0231 family.

The chain is UPF0231 protein Ent638_0667 from Enterobacter sp. (strain 638).